Here is a 126-residue protein sequence, read N- to C-terminus: Large ribosomal subunit protein bL12 (126 aa).

It belongs to the bacterial ribosomal protein bL12 family. In terms of assembly, homodimer. Part of the ribosomal stalk of the 50S ribosomal subunit. Forms a multimeric L10(L12)X complex, where L10 forms an elongated spine to which 2 to 4 L12 dimers bind in a sequential fashion. Binds GTP-bound translation factors.

In terms of biological role, forms part of the ribosomal stalk which helps the ribosome interact with GTP-bound translation factors. Is thus essential for accurate translation. In Bordetella petrii (strain ATCC BAA-461 / DSM 12804 / CCUG 43448), this protein is Large ribosomal subunit protein bL12.